The primary structure comprises 237 residues: Urease accessory protein UreF (237 aa).

The protein belongs to the UreF family. In terms of assembly, ureD, UreF and UreG form a complex that acts as a GTP-hydrolysis-dependent molecular chaperone, activating the urease apoprotein by helping to assemble the nickel containing metallocenter of UreC. The UreE protein probably delivers the nickel.

It is found in the cytoplasm. Functionally, required for maturation of urease via the functional incorporation of the urease nickel metallocenter. The protein is Urease accessory protein UreF of Streptococcus thermophilus (strain ATCC BAA-250 / LMG 18311).